Reading from the N-terminus, the 263-residue chain is MSGFAAKRRPIAKYRNGRFVEEEDEIALEFPLTITVNGEEFATIVCTPAHLDELVIGFLASEGAIRTCSDIKGMTIDGERGFAYVELAAGGLPAKQFYAKRFIGSCCGKSRQFYFYNDMKTAKTIVGGITVKADDCIRLMKALHERSTDFAATGGLHNAALATPDEMVVIRSDIGRHNALDKLYGYCLRHQVAMKDKLIVFSGRVSSEVLLKAAKMGVSVLLSKSAPTTLALDLADELGITVVGFLRGQAFNVYTHESRIIIG.

Residue C107 is the Cysteine persulfide intermediate of the active site.

This sequence belongs to the FdhD family.

Its subcellular location is the cytoplasm. Functionally, required for formate dehydrogenase (FDH) activity. Acts as a sulfur carrier protein that transfers sulfur from IscS to the molybdenum cofactor prior to its insertion into FDH. This chain is Sulfur carrier protein FdhD, found in Geobacillus kaustophilus (strain HTA426).